Reading from the N-terminus, the 167-residue chain is Ribosome maturation factor RimM (167 aa).

A PRC barrel domain is found at Glu-94–Leu-165.

The protein belongs to the RimM family. In terms of assembly, binds ribosomal protein uS19.

It is found in the cytoplasm. Functionally, an accessory protein needed during the final step in the assembly of 30S ribosomal subunit, possibly for assembly of the head region. Essential for efficient processing of 16S rRNA. May be needed both before and after RbfA during the maturation of 16S rRNA. It has affinity for free ribosomal 30S subunits but not for 70S ribosomes. This chain is Ribosome maturation factor RimM, found in Staphylococcus epidermidis (strain ATCC 35984 / DSM 28319 / BCRC 17069 / CCUG 31568 / BM 3577 / RP62A).